The primary structure comprises 274 residues: MTGFGLRLAEAKARRGPLCLGIDPHPELLRGWDLATTADGLAAFCDICVRAFADFAVVKPQVAFFESYGAAGFAVLERTIAELRAADVLVLADAKRGDIGATMSAYATAWVGDSPLAADAVTASPYLGFGSLRPLLEVAAAHGRGVFVLAATSNPEGAAVQNAAADGRSVAQLVVDQVGAANEAAGPGPGSIGVVVGATAPQAPDLSAFTGPVLVPGVGVQGGRPEALGGLGGAASSQLLPAVAREVLRAGPGVPELRAAGERMRDAVAYLAAV.

Lys-95 acts as the Proton donor in catalysis.

It belongs to the OMP decarboxylase family. Type 2 subfamily.

It catalyses the reaction orotidine 5'-phosphate + H(+) = UMP + CO2. It participates in pyrimidine metabolism; UMP biosynthesis via de novo pathway; UMP from orotate: step 2/2. In Mycobacterium bovis (strain ATCC BAA-935 / AF2122/97), this protein is Orotidine 5'-phosphate decarboxylase (pyrF).